A 525-amino-acid chain; its full sequence is GMP synthase [glutamine-hydrolyzing] (525 aa).

The 199-residue stretch at 9–207 (RILILDFGSQ…VRDICQCEAL (199 aa)) folds into the Glutamine amidotransferase type-1 domain. Catalysis depends on Cys86, which acts as the Nucleophile. Catalysis depends on residues His181 and Glu183. The 193-residue stretch at 208–400 (WTPAKIIDDA…LGLPYDMLYR (193 aa)) folds into the GMPS ATP-PPase domain. 235–241 (SGGVDSS) lines the ATP pocket.

In terms of assembly, homodimer.

It catalyses the reaction XMP + L-glutamine + ATP + H2O = GMP + L-glutamate + AMP + diphosphate + 2 H(+). The protein operates within purine metabolism; GMP biosynthesis; GMP from XMP (L-Gln route): step 1/1. Its function is as follows. Catalyzes the synthesis of GMP from XMP. The polypeptide is GMP synthase [glutamine-hydrolyzing] (Escherichia coli O8 (strain IAI1)).